A 111-amino-acid polypeptide reads, in one-letter code: Large ribosomal subunit protein uL22 (111 aa).

The protein belongs to the universal ribosomal protein uL22 family. Part of the 50S ribosomal subunit.

This protein binds specifically to 23S rRNA; its binding is stimulated by other ribosomal proteins, e.g. L4, L17, and L20. It is important during the early stages of 50S assembly. It makes multiple contacts with different domains of the 23S rRNA in the assembled 50S subunit and ribosome. In terms of biological role, the globular domain of the protein is located near the polypeptide exit tunnel on the outside of the subunit, while an extended beta-hairpin is found that lines the wall of the exit tunnel in the center of the 70S ribosome. In Chlamydia trachomatis serovar A (strain ATCC VR-571B / DSM 19440 / HAR-13), this protein is Large ribosomal subunit protein uL22.